The sequence spans 139 residues: Large ribosomal subunit protein uL16 (139 aa).

This sequence belongs to the universal ribosomal protein uL16 family. Part of the 50S ribosomal subunit.

Functionally, binds 23S rRNA and is also seen to make contacts with the A and possibly P site tRNAs. The protein is Large ribosomal subunit protein uL16 of Chlorobium phaeobacteroides (strain BS1).